The sequence spans 72 residues: Translation initiation factor IF-1 (72 aa).

The region spanning 1–72 is the S1-like domain; the sequence is MTKEENIEMQ…SKGRIIFRSR (72 aa).

Belongs to the IF-1 family. In terms of assembly, component of the 30S ribosomal translation pre-initiation complex which assembles on the 30S ribosome in the order IF-2 and IF-3, IF-1 and N-formylmethionyl-tRNA(fMet); mRNA recruitment can occur at any time during PIC assembly.

The protein resides in the cytoplasm. One of the essential components for the initiation of protein synthesis. Stabilizes the binding of IF-2 and IF-3 on the 30S subunit to which N-formylmethionyl-tRNA(fMet) subsequently binds. Helps modulate mRNA selection, yielding the 30S pre-initiation complex (PIC). Upon addition of the 50S ribosomal subunit IF-1, IF-2 and IF-3 are released leaving the mature 70S translation initiation complex. In Wigglesworthia glossinidia brevipalpis, this protein is Translation initiation factor IF-1.